Reading from the N-terminus, the 313-residue chain is Porphobilinogen deaminase (313 aa).

C242 bears the S-(dipyrrolylmethanemethyl)cysteine mark.

This sequence belongs to the HMBS family. Monomer. It depends on dipyrromethane as a cofactor.

The enzyme catalyses 4 porphobilinogen + H2O = hydroxymethylbilane + 4 NH4(+). It functions in the pathway porphyrin-containing compound metabolism; protoporphyrin-IX biosynthesis; coproporphyrinogen-III from 5-aminolevulinate: step 2/4. Functionally, tetrapolymerization of the monopyrrole PBG into the hydroxymethylbilane pre-uroporphyrinogen in several discrete steps. This chain is Porphobilinogen deaminase, found in Proteus mirabilis (strain HI4320).